A 402-amino-acid polypeptide reads, in one-letter code: Arginine deiminase (402 aa).

The Amidino-cysteine intermediate role is filled by cysteine 392.

It belongs to the arginine deiminase family.

It localises to the cytoplasm. It carries out the reaction L-arginine + H2O = L-citrulline + NH4(+). It functions in the pathway amino-acid degradation; L-arginine degradation via ADI pathway; carbamoyl phosphate from L-arginine: step 1/2. This Mycobacterium avium (strain 104) protein is Arginine deiminase.